Consider the following 88-residue polypeptide: Small ribosomal subunit protein eS25B (88 aa).

The protein belongs to the eukaryotic ribosomal protein eS25 family. Component of the small ribosomal subunit (SSU). Mature yeast ribosomes consist of a small (40S) and a large (60S) subunit. The 40S small subunit contains 1 molecule of ribosomal RNA (18S rRNA) and at least 33 different proteins. The large 60S subunit contains 3 rRNA molecules (25S, 5.8S and 5S rRNA) and at least 46 different proteins.

Its subcellular location is the cytoplasm. In terms of biological role, component of the ribosome, a large ribonucleoprotein complex responsible for the synthesis of proteins in the cell. The small ribosomal subunit (SSU) binds messenger RNAs (mRNAs) and translates the encoded message by selecting cognate aminoacyl-transfer RNA (tRNA) molecules. The large subunit (LSU) contains the ribosomal catalytic site termed the peptidyl transferase center (PTC), which catalyzes the formation of peptide bonds, thereby polymerizing the amino acids delivered by tRNAs into a polypeptide chain. The nascent polypeptides leave the ribosome through a tunnel in the LSU and interact with protein factors that function in enzymatic processing, targeting, and the membrane insertion of nascent chains at the exit of the ribosomal tunnel. This is Small ribosomal subunit protein eS25B (rps2501) from Schizosaccharomyces pombe (strain 972 / ATCC 24843) (Fission yeast).